The chain runs to 565 residues: NAD-dependent malic enzyme (565 aa).

Tyrosine 104 functions as the Proton donor in the catalytic mechanism. Arginine 157 contributes to the NAD(+) binding site. Lysine 175 (proton acceptor) is an active-site residue. A divalent metal cation contacts are provided by glutamate 246, aspartate 247, and aspartate 270. NAD(+)-binding residues include aspartate 270 and asparagine 418.

It belongs to the malic enzymes family. Homotetramer. It depends on Mg(2+) as a cofactor. Mn(2+) is required as a cofactor.

The catalysed reaction is (S)-malate + NAD(+) = pyruvate + CO2 + NADH. It catalyses the reaction oxaloacetate + H(+) = pyruvate + CO2. The polypeptide is NAD-dependent malic enzyme (Shigella sonnei (strain Ss046)).